Here is a 71-residue protein sequence, read N- to C-terminus: NAD(P)H-quinone oxidoreductase subunit O (71 aa).

This sequence belongs to the complex I NdhO subunit family. NDH-1 can be composed of about 15 different subunits; different subcomplexes with different compositions have been identified which probably have different functions.

The protein localises to the cellular thylakoid membrane. It carries out the reaction a plastoquinone + NADH + (n+1) H(+)(in) = a plastoquinol + NAD(+) + n H(+)(out). The enzyme catalyses a plastoquinone + NADPH + (n+1) H(+)(in) = a plastoquinol + NADP(+) + n H(+)(out). Its function is as follows. NDH-1 shuttles electrons from an unknown electron donor, via FMN and iron-sulfur (Fe-S) centers, to quinones in the respiratory and/or the photosynthetic chain. The immediate electron acceptor for the enzyme in this species is believed to be plastoquinone. Couples the redox reaction to proton translocation, and thus conserves the redox energy in a proton gradient. Cyanobacterial NDH-1 also plays a role in inorganic carbon-concentration. The chain is NAD(P)H-quinone oxidoreductase subunit O from Microcystis aeruginosa (strain NIES-843 / IAM M-2473).